Reading from the N-terminus, the 280-residue chain is Putative pyruvate, phosphate dikinase regulatory protein (280 aa).

147-154 (GASRSSKT) provides a ligand contact to ADP.

Belongs to the pyruvate, phosphate/water dikinase regulatory protein family. PDRP subfamily.

The enzyme catalyses N(tele)-phospho-L-histidyl/L-threonyl-[pyruvate, phosphate dikinase] + ADP = N(tele)-phospho-L-histidyl/O-phospho-L-threonyl-[pyruvate, phosphate dikinase] + AMP + H(+). The catalysed reaction is N(tele)-phospho-L-histidyl/O-phospho-L-threonyl-[pyruvate, phosphate dikinase] + phosphate + H(+) = N(tele)-phospho-L-histidyl/L-threonyl-[pyruvate, phosphate dikinase] + diphosphate. Functionally, bifunctional serine/threonine kinase and phosphorylase involved in the regulation of the pyruvate, phosphate dikinase (PPDK) by catalyzing its phosphorylation/dephosphorylation. The chain is Putative pyruvate, phosphate dikinase regulatory protein from Pelobacter propionicus (strain DSM 2379 / NBRC 103807 / OttBd1).